The sequence spans 231 residues: Small ribosomal subunit protein uS3 (231 aa).

Positions 39 to 107 constitute a KH type-2 domain; sequence IRKFIKEKLF…QVSVNIVEIK (69 aa).

Belongs to the universal ribosomal protein uS3 family. In terms of assembly, part of the 30S ribosomal subunit. Forms a tight complex with proteins S10 and S14.

Binds the lower part of the 30S subunit head. Binds mRNA in the 70S ribosome, positioning it for translation. This is Small ribosomal subunit protein uS3 from Pelotomaculum thermopropionicum (strain DSM 13744 / JCM 10971 / SI).